Here is a 363-residue protein sequence, read N- to C-terminus: Homeobox protein Hox-A2 (363 aa).

Disordered regions lie at residues 23-133 (TSFP…SRRL) and 183-216 (MKHKRQTQCKENQNGDGKFKNLEDSGQTEDDEEK). Polar residues-rich tracts occupy residues 31–46 (TFQSSSIKNSTLSHST) and 55–78 (TIPSLNPSSHPRQSRPKQSPNGTS). Positions 88-93 (EYPWMK) match the Antp-type hexapeptide motif. Residues 130 to 189 (SRRLRTAYTNTQLLELEKEFHFNKYLCRPRRVEIAALLDLTERQVKVWFQNRRMKHKRQT) constitute a DNA-binding region (homeobox).

This sequence belongs to the Antp homeobox family. Proboscipedia subfamily.

It localises to the nucleus. Its function is as follows. Sequence-specific transcription factor which is part of a developmental regulatory system that provides cells with specific positional identities on the anterior-posterior axis. The protein is Homeobox protein Hox-A2 (HOXA2) of Heterodontus francisci (Horn shark).